The following is a 441-amino-acid chain: Putative transporter AmpG 1 (441 aa).

Helical transmembrane passes span Ser5–Gly25, Ile42–Phe62, Leu78–Leu98, Leu104–Ile124, Gly143–Leu163, Glu171–Ala191, Ser249–Tyr269, Val297–Met317, Ser325–Ile345, Leu352–Ile372, Phe390–Val410, and Phe413–Leu433.

This sequence belongs to the major facilitator superfamily.

The protein localises to the cell inner membrane. This Rickettsia felis (strain ATCC VR-1525 / URRWXCal2) (Rickettsia azadi) protein is Putative transporter AmpG 1 (ampG1).